Here is a 740-residue protein sequence, read N- to C-terminus: UvrABC system protein B (740 aa).

The tract at residues 1-36 (MTIAIRTTLDEPENHSDFVPHRPSRPEKTEPSKPFR) is disordered. Residues 8–33 (TLDEPENHSDFVPHRPSRPEKTEPSK) show a composition bias toward basic and acidic residues. The region spanning 56–444 (KDIQKGERDQ…GGVFVEQIIR (389 aa)) is the Helicase ATP-binding domain. 69 to 76 (GVTGSGKT) serves as a coordination point for ATP. Positions 122 to 145 (YYDYYQPEAYVPRTDTYIEKDSAI) match the Beta-hairpin motif. The region spanning 461–627 (QVDNLIFEAK…TVKRQVDDIV (167 aa)) is the Helicase C-terminal domain. One can recognise a UVR domain in the interval 651-686 (ARSISETEKEMLEAAANLEFEKAAQLRDVLHQLKRQ). The tract at residues 687–740 (ELGLPPEKSSEIQGRSEAGRPGTRKTRSDKAREAKASKRVKQEAGEKLLRSRGH) is disordered. Residues 712 to 740 (TRSDKAREAKASKRVKQEAGEKLLRSRGH) are compositionally biased toward basic and acidic residues.

The protein belongs to the UvrB family. Forms a heterotetramer with UvrA during the search for lesions. Interacts with UvrC in an incision complex.

Its subcellular location is the cytoplasm. Functionally, the UvrABC repair system catalyzes the recognition and processing of DNA lesions. A damage recognition complex composed of 2 UvrA and 2 UvrB subunits scans DNA for abnormalities. Upon binding of the UvrA(2)B(2) complex to a putative damaged site, the DNA wraps around one UvrB monomer. DNA wrap is dependent on ATP binding by UvrB and probably causes local melting of the DNA helix, facilitating insertion of UvrB beta-hairpin between the DNA strands. Then UvrB probes one DNA strand for the presence of a lesion. If a lesion is found the UvrA subunits dissociate and the UvrB-DNA preincision complex is formed. This complex is subsequently bound by UvrC and the second UvrB is released. If no lesion is found, the DNA wraps around the other UvrB subunit that will check the other stand for damage. The protein is UvrABC system protein B of Zymomonas mobilis subsp. mobilis (strain ATCC 31821 / ZM4 / CP4).